The following is a 207-amino-acid chain: LexA repressor (207 aa).

The H-T-H motif DNA-binding region spans 28–48 (VREIGEAVGLASSSTVHGHLA). Catalysis depends on for autocatalytic cleavage activity residues serine 129 and lysine 167.

This sequence belongs to the peptidase S24 family. In terms of assembly, homodimer.

It catalyses the reaction Hydrolysis of Ala-|-Gly bond in repressor LexA.. In terms of biological role, represses a number of genes involved in the response to DNA damage (SOS response), including recA and lexA. In the presence of single-stranded DNA, RecA interacts with LexA causing an autocatalytic cleavage which disrupts the DNA-binding part of LexA, leading to derepression of the SOS regulon and eventually DNA repair. The sequence is that of LexA repressor from Geobacillus thermodenitrificans (strain NG80-2).